Consider the following 524-residue polypeptide: Cytochrome P450 4F12 (524 aa).

A run of 2 helical transmembrane segments spans residues 19–39 and 87–107; these read WLLL…AWTY and GFTV…PDTI. Cysteine 468 provides a ligand contact to heme.

It belongs to the cytochrome P450 family. Requires heme as cofactor. In terms of tissue distribution, expressed in small intestine, liver, colon and heart.

The protein localises to the endoplasmic reticulum membrane. It localises to the microsome membrane. It catalyses the reaction an organic molecule + reduced [NADPH--hemoprotein reductase] + O2 = an alcohol + oxidized [NADPH--hemoprotein reductase] + H2O + H(+). The enzyme catalyses (5Z,8Z,11Z,14Z)-eicosatetraenoate + reduced [NADPH--hemoprotein reductase] + O2 = 18-hydroxy-(5Z,8Z,11Z,14Z)-eicosatetraenoate + oxidized [NADPH--hemoprotein reductase] + H2O + H(+). The catalysed reaction is (7Z,10Z,13Z,16Z,19Z)-docosapentaenoate + reduced [NADPH--hemoprotein reductase] + O2 = 10,11-epoxy-(7Z,13Z,16Z,19Z)-docosatetraenoate + oxidized [NADPH--hemoprotein reductase] + H2O + H(+). It carries out the reaction (7Z,10Z,13Z,16Z,19Z)-docosapentaenoate + reduced [NADPH--hemoprotein reductase] + O2 = 13,14-epoxy-(7Z,10Z,16Z,19Z)-docosatetraenoate + oxidized [NADPH--hemoprotein reductase] + H2O + H(+). It catalyses the reaction (7Z,10Z,13Z,16Z,19Z)-docosapentaenoate + reduced [NADPH--hemoprotein reductase] + O2 = 16,17-epoxy-(7Z,10Z,13Z,19Z)-docosatetraenoate + oxidized [NADPH--hemoprotein reductase] + H2O + H(+). The enzyme catalyses (7Z,10Z,13Z,16Z,19Z)-docosapentaenoate + reduced [NADPH--hemoprotein reductase] + O2 = 19,20-epoxy-(7Z,10Z,13Z,16Z)-docosatetraenoate + oxidized [NADPH--hemoprotein reductase] + H2O + H(+). The catalysed reaction is (4Z,7Z,10Z,13Z,16Z,19Z)-docosahexaenoate + reduced [NADPH--hemoprotein reductase] + O2 = 10,11-epoxy-(4Z,7Z,13Z,16Z,19Z)-docosapentaenoate + oxidized [NADPH--hemoprotein reductase] + H2O + H(+). It carries out the reaction (4Z,7Z,10Z,13Z,16Z,19Z)-docosahexaenoate + reduced [NADPH--hemoprotein reductase] + O2 = 13,14-epoxy-(4Z,7Z,10Z,16Z,19Z)-docosapentaenoate + oxidized [NADPH--hemoprotein reductase] + H2O + H(+). It catalyses the reaction (4Z,7Z,10Z,13Z,16Z,19Z)-docosahexaenoate + reduced [NADPH--hemoprotein reductase] + O2 = 16,17-epoxy-(4Z,7Z,10Z,13Z,19Z)-docosapentaenoate + oxidized [NADPH--hemoprotein reductase] + H2O + H(+). The enzyme catalyses (4Z,7Z,10Z,13Z,16Z,19Z)-docosahexaenoate + reduced [NADPH--hemoprotein reductase] + O2 = 19,20-epoxy-(4Z,7Z,10Z,13Z,16Z)-docosapentaenoate + oxidized [NADPH--hemoprotein reductase] + H2O + H(+). The protein operates within lipid metabolism; arachidonate metabolism. In terms of biological role, a cytochrome P450 monooxygenase involved in the metabolism of endogenous polyunsaturated fatty acids (PUFAs). Mechanistically, uses molecular oxygen inserting one oxygen atom into a substrate, and reducing the second into a water molecule, with two electrons provided by NADPH via cytochrome P450 reductase (CPR; NADPH-ferrihemoprotein reductase). Catalyzes the hydroxylation of carbon hydrogen bonds, with preference for omega-2 position. Metabolizes (5Z,8Z,11Z,14Z)-eicosatetraenoic acid (arachidonate) toward 18-hydroxy arachidonate. Catalyzes the epoxidation of double bonds of PUFAs such as docosapentaenoic and docosahexaenoic acids. Has low omega-hydroxylase activity toward leukotriene B4 and arachidonate. Involved in the metabolism of xenobiotics. Catalyzes the hydroxylation of the antihistamine drug ebastine. The polypeptide is Cytochrome P450 4F12 (Homo sapiens (Human)).